Consider the following 1047-residue polypeptide: Jouberin (1047 aa).

Composition is skewed to basic and acidic residues over residues 1–17 (MEQE…EKVR) and 77–86 (LLHDDKLGSE). Disordered stretches follow at residues 1 to 44 (MEQE…LTEA) and 67 to 185 (EQLT…SPVH). The interaction with HAP1 stretch occupies residues 1–285 (MEQETPEKVD…IFNENFPYLL (285 aa)). Over residues 87–96 (KRKKKKKKKV) the composition is skewed to basic residues. Over residues 116 to 132 (GEQKKEGAPEGSHHREG) the composition is skewed to basic and acidic residues. Residues 150–160 (PKPKKMKKKPK) are compositionally biased toward basic residues. A compositionally biased stretch (basic and acidic residues) spans 173-185 (GVHEITGRDSPVH). WD repeat units lie at residues 458–500 (AGER…FMRE), 503–542 (GHLN…TSTF), 546–586 (PHPS…DAAI), 593–632 (VHKS…TDVQ), 649–688 (FRGV…ARKF), 692–731 (ANYR…QVAM), and 736–777 (PFKS…AQQE). At S854 the chain carries Phosphoserine. An SH3 domain is found at 903-963 (DPPPMVVALY…PANHVASETL (61 aa)). Basic and acidic residues-rich tracts occupy residues 964-1003 (YRDS…RFLD) and 1012-1040 (GHSE…EPTV). The disordered stretch occupies residues 964-1047 (YRDSPPKVKE…PTVRKVTLIE (84 aa)). A Phosphoserine modification is found at S975.

As to quaternary structure, self-associates. Part of the tectonic-like complex (also named B9 complex). Interacts with MKS1. Interacts with NPHP1; probably as heterodimers and/or AHI1(2):NPHP1(2) heterotetramers. Interacts (via SH3 domain) with the dynamin GTPase DNM2. Interacts with HAP1; probably as AHI1(2):HAP1(2) heterotetramers. Interacts with RAB8A. Interacts with CEND1. Interacts with SPATA7.

It localises to the cytoplasm. The protein localises to the cytoskeleton. The protein resides in the cilium basal body. It is found in the microtubule organizing center. Its subcellular location is the centrosome. It localises to the centriole. The protein localises to the cell junction. The protein resides in the adherens junction. Its function is as follows. Involved in vesicle trafficking and required for ciliogenesis, formation of primary non-motile cilium, and recruitment of RAB8A to the basal body of primary cilium. Component of the tectonic-like complex, a complex localized at the transition zone of primary cilia and acting as a barrier that prevents diffusion of transmembrane proteins between the cilia and plasma membranes. Involved in neuronal differentiation. As a positive modulator of classical Wnt signaling, may play a crucial role in ciliary signaling during cerebellum embryonic development. The chain is Jouberin (Ahi1) from Rattus norvegicus (Rat).